Consider the following 249-residue polypeptide: Probable transcriptional regulatory protein Meso_3192 (249 aa).

It belongs to the TACO1 family.

It is found in the cytoplasm. The chain is Probable transcriptional regulatory protein Meso_3192 from Chelativorans sp. (strain BNC1).